Reading from the N-terminus, the 497-residue chain is MTLLDSDSRQSAEVLPAAGPAPDRPRTYQVRTFGCQMNMHDSERIAGLLEAAGYVRAADDEPADVVVFNTCAVRENADNRLYGNLGLLLPVKKAKPDMQIAVGGCLAQKDKGDIVRRAPWVDVVFGTHNIEALPVLLERARIAREAQVEIREALEVFPSTLPSRRESVYAAWVAISVGCNNTCTFCIVPSLRGRERDRRPGDILREIQTLVADGVLEVTLLGQNVNSYGVDFGDRQAFAKLLRACGTIDGLERVRFTSPHPRDFTDDVIAAMAETPNVMPQLHMPLQSGSDAVLRRMRRSYRKEKYLDIISRVRSAIPDAAITTDIIVGFPGETEDDFAETLDVVRKARFAGAFTFQYSKRPGTPAAEMPDQVPPDVVADRFARLVALVEQIALEENQAQVGRVVEVLVAEGEGRKDAETHRMSGRAPDNRLVHFRATDARPGDVVTVAVTQAAPHCLIADQVLGVRRTRAGDAWEARRSVRPSGVLLGMPALRPRT.

Residues 1-10 (MTLLDSDSRQ) are compositionally biased toward basic and acidic residues. The tract at residues 1 to 26 (MTLLDSDSRQSAEVLPAAGPAPDRPR) is disordered. The MTTase N-terminal domain occupies 26–142 (RTYQVRTFGC…LPVLLERARI (117 aa)). Residues cysteine 35, cysteine 71, cysteine 105, cysteine 179, cysteine 183, and cysteine 186 each coordinate [4Fe-4S] cluster. A Radical SAM core domain is found at 165–395 (RESVYAAWVA…VALVEQIALE (231 aa)). The TRAM domain maps to 398–464 (QAQVGRVVEV…PHCLIADQVL (67 aa)).

It belongs to the methylthiotransferase family. MiaB subfamily. In terms of assembly, monomer. [4Fe-4S] cluster is required as a cofactor.

It localises to the cytoplasm. The enzyme catalyses N(6)-dimethylallyladenosine(37) in tRNA + (sulfur carrier)-SH + AH2 + 2 S-adenosyl-L-methionine = 2-methylsulfanyl-N(6)-dimethylallyladenosine(37) in tRNA + (sulfur carrier)-H + 5'-deoxyadenosine + L-methionine + A + S-adenosyl-L-homocysteine + 2 H(+). Its function is as follows. Catalyzes the methylthiolation of N6-(dimethylallyl)adenosine (i(6)A), leading to the formation of 2-methylthio-N6-(dimethylallyl)adenosine (ms(2)i(6)A) at position 37 in tRNAs that read codons beginning with uridine. The sequence is that of tRNA-2-methylthio-N(6)-dimethylallyladenosine synthase from Acidothermus cellulolyticus (strain ATCC 43068 / DSM 8971 / 11B).